Here is a 500-residue protein sequence, read N- to C-terminus: L-arabinose isomerase (500 aa).

4 residues coordinate Mn(2+): Glu306, Glu333, His349, and His448.

Belongs to the arabinose isomerase family. Requires Mn(2+) as cofactor.

The enzyme catalyses beta-L-arabinopyranose = L-ribulose. Its pathway is carbohydrate degradation; L-arabinose degradation via L-ribulose; D-xylulose 5-phosphate from L-arabinose (bacterial route): step 1/3. In terms of biological role, catalyzes the conversion of L-arabinose to L-ribulose. This Saccharophagus degradans (strain 2-40 / ATCC 43961 / DSM 17024) protein is L-arabinose isomerase.